The sequence spans 348 residues: [FeFe] hydrogenase maturase subunit HydE (348 aa).

Residues D49–T268 form the Radical SAM core domain. Positions 63, 67, and 70 each coordinate [4Fe-4S] cluster. [2Fe-2S] cluster-binding residues include C311, C319, and C322.

The protein belongs to the radical SAM superfamily. HydE family. As to quaternary structure, monomer. [4Fe-4S] cluster is required as a cofactor. [2Fe-2S] cluster serves as cofactor.

Functionally, required for the maturation of the [FeFe]-hydrogenase HydA. Catalyzes the reductive cleavage of S-adenosyl-L-methionine (in vitro), suggesting it may contribute to the biosynthesis of an essential sulfur-containing ligand that binds to the hydrogenase active site [2Fe-2S] cluster. The chain is [FeFe] hydrogenase maturase subunit HydE from Thermotoga maritima (strain ATCC 43589 / DSM 3109 / JCM 10099 / NBRC 100826 / MSB8).